The primary structure comprises 74 residues: RNA-binding protein Hfq (74 aa).

Residues 9–69 form the Sm domain; it reads DQFLNQLRKE…ISTFMPQKNV (61 aa).

This sequence belongs to the Hfq family. Homohexamer.

Functionally, RNA chaperone that binds small regulatory RNA (sRNAs) and mRNAs to facilitate mRNA translational regulation in response to envelope stress, environmental stress and changes in metabolite concentrations. Also binds with high specificity to tRNAs. The sequence is that of RNA-binding protein Hfq from Bacillus cytotoxicus (strain DSM 22905 / CIP 110041 / 391-98 / NVH 391-98).